Consider the following 175-residue polypeptide: Large ribosomal subunit protein uL10 (175 aa).

It belongs to the universal ribosomal protein uL10 family. As to quaternary structure, part of the ribosomal stalk of the 50S ribosomal subunit. The N-terminus interacts with L11 and the large rRNA to form the base of the stalk. The C-terminus forms an elongated spine to which L12 dimers bind in a sequential fashion forming a multimeric L10(L12)X complex.

In terms of biological role, forms part of the ribosomal stalk, playing a central role in the interaction of the ribosome with GTP-bound translation factors. This is Large ribosomal subunit protein uL10 from Methylobacterium nodulans (strain LMG 21967 / CNCM I-2342 / ORS 2060).